A 282-amino-acid chain; its full sequence is ATP synthase gamma chain (282 aa).

It belongs to the ATPase gamma chain family. In terms of assembly, F-type ATPases have 2 components, CF(1) - the catalytic core - and CF(0) - the membrane proton channel. CF(1) has five subunits: alpha(3), beta(3), gamma(1), delta(1), epsilon(1). CF(0) has three main subunits: a, b and c.

It is found in the cell membrane. Produces ATP from ADP in the presence of a proton gradient across the membrane. The gamma chain is believed to be important in regulating ATPase activity and the flow of protons through the CF(0) complex. The protein is ATP synthase gamma chain of Clostridium botulinum (strain Kyoto / Type A2).